The chain runs to 168 residues: Probable deoxyuridine 5'-triphosphate nucleotidohydrolase (168 aa).

Belongs to the dCTP deaminase family. Archaeal dUTPase subfamily.

It carries out the reaction dUTP + H2O = dUMP + diphosphate + H(+). It participates in pyrimidine metabolism; dUMP biosynthesis; dUMP from dCTP (dUTP route): step 2/2. In terms of biological role, this enzyme is involved in nucleotide metabolism: it produces dUMP, the immediate precursor of thymidine nucleotides and it decreases the intracellular concentration of dUTP so that uracil cannot be incorporated into DNA. In Archaeoglobus fulgidus (strain ATCC 49558 / DSM 4304 / JCM 9628 / NBRC 100126 / VC-16), this protein is Probable deoxyuridine 5'-triphosphate nucleotidohydrolase.